Consider the following 537-residue polypeptide: Phosphoenolpyruvate carboxykinase (ATP) (537 aa).

Positions 61, 195, and 201 each coordinate substrate. ATP contacts are provided by residues Lys201, His220, and 236–244 (GLSGTGKTT). Mn(2+) is bound by residues Lys201 and His220. Asp257 lines the Mn(2+) pocket. 3 residues coordinate ATP: Glu285, Arg323, and Thr448. Arg323 is a substrate binding site.

This sequence belongs to the phosphoenolpyruvate carboxykinase (ATP) family. Mn(2+) serves as cofactor.

It is found in the cytoplasm. The catalysed reaction is oxaloacetate + ATP = phosphoenolpyruvate + ADP + CO2. Its pathway is carbohydrate biosynthesis; gluconeogenesis. Functionally, involved in the gluconeogenesis. Catalyzes the conversion of oxaloacetate (OAA) to phosphoenolpyruvate (PEP) through direct phosphoryl transfer between the nucleoside triphosphate and OAA. The chain is Phosphoenolpyruvate carboxykinase (ATP) from Rhodopseudomonas palustris (strain BisA53).